Here is a 345-residue protein sequence, read N- to C-terminus: Homeobox protein DBX1 (345 aa).

Disordered stretches follow at residues 55-103 (PRGS…VSPA) and 241-345 (KERE…ITVS). The homeobox DNA-binding region spans 182 to 241 (GMLRRAVFSDVQRKALEKMFQKQKYISKPDRKKLAAKLGLKDSQVKIWFQNRRMKWRNSK). Over residues 300–309 (DPRHLRDPRL) the composition is skewed to basic and acidic residues. Residues 330-345 (SDSEDDEEGEEEITVS) are compositionally biased toward acidic residues.

This sequence belongs to the H2.0 homeobox family.

It is found in the nucleus. Functionally, could have a role in patterning the central nervous system during embryogenesis. Has a key role in regulating the distinct phenotypic features that distinguish two major classes of ventral interneurons, V0 and V1 neurons. Regulates the transcription factor profile, neurotransmitter phenotype, intraspinal migratory path and axonal trajectory of V0 neurons, features that differentiate them from an adjacent set of V1 neurons. This Bos taurus (Bovine) protein is Homeobox protein DBX1 (DBX1).